Here is a 358-residue protein sequence, read N- to C-terminus: Serine/threonine-protein phosphatase 2A activator 2 (358 aa).

The protein belongs to the PTPA-type PPIase family.

It is found in the cytoplasm. It catalyses the reaction [protein]-peptidylproline (omega=180) = [protein]-peptidylproline (omega=0). Functionally, PPIases accelerate the folding of proteins. It catalyzes the cis-trans isomerization of proline imidic peptide bonds in oligopeptides. Acts as a regulatory subunit for PP2A-like phosphatases modulating their activity or substrate specificity, probably by inducing a conformational change in the catalytic subunit, a direct target of the PPIase. Can reactivate inactive phosphatase PP2A-phosphatase methylesterase complexes (PP2Ai) in presence of ATP and Mg(2+) by dissociating the inactive form from the complex. In Candida glabrata (strain ATCC 2001 / BCRC 20586 / JCM 3761 / NBRC 0622 / NRRL Y-65 / CBS 138) (Yeast), this protein is Serine/threonine-protein phosphatase 2A activator 2 (RRD2).